The following is a 122-amino-acid chain: Anti-sigma-F factor antagonist RsfB (122 aa).

The 109-residue stretch at 7 to 115 (ITVTVADHNG…STLHDALTGV (109 aa)) folds into the STAS domain. Ser61 is modified (phosphoserine).

The protein belongs to the anti-sigma-factor antagonist family. As to quaternary structure, interacts with anti-sigma-F factor RsbW (UsfX). Its phosphorylation may prevent this interaction. Putative phosphorylation on Ser-61 may prevent interaction with RsbW.

In terms of biological role, positive regulator of sigma-F (SigF) activity. Binds to anti-sigma-F factor RsbW (UsfX) preventing its binding to SigF, thus activating transcription. In Mycobacterium tuberculosis (strain CDC 1551 / Oshkosh), this protein is Anti-sigma-F factor antagonist RsfB (rsfB).